The sequence spans 720 residues: Pro-neuregulin-3, membrane-bound isoform (720 aa).

Residues 1–360 (MSEGAAAASP…MESEEVYQRQ (360 aa)) are Extracellular-facing. 3 disordered regions span residues 28-48 (AAAA…AAEP), 119-223 (SSFP…AMPS), and 246-280 (PFQD…TTYS). Positions 34-44 (AGGGPDGGGEG) are enriched in gly residues. Positions 127-148 (TTTTTTSTTSPATPSAGGAASS) are enriched in low complexity. Residues 149-163 (RTPNRISTRLTTITR) show a composition bias toward polar residues. Low complexity-rich tracts occupy residues 187-205 (TAAP…SSST) and 250-271 (AASS…TSTS). The EGF-like domain maps to 286-329 (HFKPCRDKDLAYCLNDGECFVIETLTGSHKHCRCKEGYQGVRCD). Disulfide bonds link Cys-290/Cys-304, Cys-298/Cys-317, and Cys-319/Cys-328. The helical transmembrane segment at 361–381 (VLSISCIIFGIVIVGMFCAAF) threads the bilayer. Residues 382 to 720 (YFKSKKQAKQ…EIQRDSALTK (339 aa)) lie on the Cytoplasmic side of the membrane. The disordered stretch occupies residues 451–481 (PQSFPEVPSPDRGSQSVKHHRSLSSCCSPGQ).

This sequence belongs to the neuregulin family. As to quaternary structure, interacts with ERBB4. In terms of processing, proteolytic cleavage close to the plasma membrane on the external face leads to the release of the soluble growth factor form. Extensive glycosylation precedes the proteolytic cleavage. Isoform 3 is glycosylated. As to expression, highly expressed in most regions of the brain with the exception of corpus callosum. Expressed at lower level in testis. Not detected in heart, placenta, lung, liver, skeletal muscle, kidney, pancreas, spleen, thymus, prostate, ovary, small intestine, colon and peripheral blood leukocytes.

The protein localises to the cell membrane. It localises to the secreted. Its function is as follows. Direct ligand for the ERBB4 tyrosine kinase receptor. Binding results in ligand-stimulated tyrosine phosphorylation and activation of the receptor. Does not bind to the EGF receptor, ERBB2 or ERBB3 receptors. May be a survival factor for oligodendrocytes. The sequence is that of Pro-neuregulin-3, membrane-bound isoform (NRG3) from Homo sapiens (Human).